The sequence spans 488 residues: Galactose-1-phosphate uridylyltransferase (488 aa).

This sequence belongs to the galactose-1-phosphate uridylyltransferase type 2 family.

The protein resides in the cytoplasm. The catalysed reaction is alpha-D-galactose 1-phosphate + UDP-alpha-D-glucose = alpha-D-glucose 1-phosphate + UDP-alpha-D-galactose. It functions in the pathway carbohydrate metabolism; galactose metabolism. This is Galactose-1-phosphate uridylyltransferase (galT) from Lactobacillus helveticus (Lactobacillus suntoryeus).